Consider the following 518-residue polypeptide: Protein translocase subunit SecD (518 aa).

The next 6 helical transmembrane spans lie at 9-29 (IVLSIICTVFAIICALPNFIQ), 356-376 (GKKAGLIGFVAVCIFMILSYG), 377-397 (VIGLFANIALILALLYILALL), 406-426 (LPGIAGIILTIGMAVDANVLI), 463-483 (LIVAFALYIFGVGAIKGFAVA), and 486-506 (IGIISSMFSAIIITKLLIDVW).

Belongs to the SecD/SecF family. SecD subfamily. Forms a complex with SecF. Part of the essential Sec protein translocation apparatus which comprises SecA, SecYEG and auxiliary proteins SecDF-YajC and YidC.

It is found in the cell inner membrane. Its function is as follows. Part of the Sec protein translocase complex. Interacts with the SecYEG preprotein conducting channel. SecDF uses the proton motive force (PMF) to complete protein translocation after the ATP-dependent function of SecA. In Rickettsia prowazekii (strain Madrid E), this protein is Protein translocase subunit SecD.